The sequence spans 379 residues: MESEKIYMTANPYLCTECGKGYTCLASLTQHQKTHIGEKPYECKICGKSFTRNSNLVQHQRIHTGEKPYECNECGKAFSQSTNLIQHQRVHTGEKPYECNECEKTFSHRSSLRNHERIHTGEKPYPCNECGKAFSHISALTQHHRIHTGKKPYECTECGKTFSRSTHLIEHQGIHSEEKSYQCKQCRKVFCHSTSLIRHQRTHTGEKPYECNECGKAFSHTPAFIQHQRIHTGEKPYECNACGKAFNRSAHLTEHQRTHTGEKPYVCKECGKTFSRSTHLTEHLKIHSCVKPYQCNECQKLFCYRTSLIRHQRTHTGEKPYQCNECGKSFSLSSALTKHKRIHTRERPYQCTKCGDVFCHSTSLIRHQKTHFRKETLAE.

13 C2H2-type zinc fingers span residues 13–35, 41–63, 69–91, 97–119, 125–147, 153–175, 181–203, 209–231, 237–259, 265–287, 293–315, 321–343, and 349–371; these read YLCT…QKTH, YECK…QRIH, YECN…QRVH, YECN…ERIH, YPCN…HRIH, YECT…QGIH, YQCK…QRTH, YECN…QRIH, YECN…QRTH, YVCK…LKIH, YQCN…QRTH, YQCN…KRIH, and YQCT…QKTH.

This sequence belongs to the krueppel C2H2-type zinc-finger protein family.

Its subcellular location is the nucleus. In terms of biological role, may be involved in transcriptional regulation. This chain is Zinc finger protein 883 (ZNF883), found in Homo sapiens (Human).